We begin with the raw amino-acid sequence, 440 residues long: DNA polymerase delta small subunit (440 aa).

It belongs to the DNA polymerase delta/II small subunit family. In terms of assembly, heterodimer with subunits of 125 kDa and 50 kDa.

It localises to the nucleus. The enzyme catalyses DNA(n) + a 2'-deoxyribonucleoside 5'-triphosphate = DNA(n+1) + diphosphate. The function of the small subunit is not yet clear. This is DNA polymerase delta small subunit (POLD2) from Arabidopsis thaliana (Mouse-ear cress).